Consider the following 41-residue polypeptide: Large ribosomal subunit protein bL36 (41 aa).

This sequence belongs to the bacterial ribosomal protein bL36 family.

In Parvibaculum lavamentivorans (strain DS-1 / DSM 13023 / NCIMB 13966), this protein is Large ribosomal subunit protein bL36.